Consider the following 227-residue polypeptide: 4'-phosphopantetheinyl transferase PptT (227 aa).

CoA is bound by residues Arg48, Arg56, 75–78, 92–93, and Asp114; these read KGDK and TH. Residues Asp114, Ala115, and Glu116 each coordinate Mg(2+). CoA is bound by residues Glu157, Lys161, and Leu171.

Belongs to the P-Pant transferase superfamily. It depends on Mg(2+) as a cofactor.

The catalysed reaction is apo-[ACP] + CoA = holo-[ACP] + adenosine 3',5'-bisphosphate + H(+). Inhibited by the amidino-urea compound 1-[(2,6-diethylphenyl)-3-N-ethylcarbamimodoyl]urea (compound 8918). It acts by binding to the phosphopantetheine pocket in the active site. Inhibition by compound 8918 kills M.tuberculosis. Transfers the 4'-phosphopantetheine moiety from coenzyme A to a Ser of acyl-carrier-protein. Involved in post-translational modification of various type-I polyketide synthases required for the formation of both mycolic acids and lipid virulence factors. Acts on Pks13, Mas, PpsA, PpsB, PpsC and PpsD. Also acts on AcpM, the meromycolate extension acyl carrier protein. In addition, is involved in the activation of the acyl carrier protein MbtL and the nonribosomal peptides synthases MbtB and MbtE, which are involved in the biosynthesis of the siderophore mycobactin. In terms of biological role, required for the replication and survival of Mycobacterium during the acute and chronic phases of infection in mice. The protein is 4'-phosphopantetheinyl transferase PptT of Mycobacterium tuberculosis (strain ATCC 25618 / H37Rv).